The primary structure comprises 333 residues: Phenylalanine--tRNA ligase alpha subunit (333 aa).

Position 248 (Glu-248) interacts with Mg(2+).

Belongs to the class-II aminoacyl-tRNA synthetase family. Phe-tRNA synthetase alpha subunit type 1 subfamily. In terms of assembly, tetramer of two alpha and two beta subunits. Mg(2+) is required as a cofactor.

The protein resides in the cytoplasm. It carries out the reaction tRNA(Phe) + L-phenylalanine + ATP = L-phenylalanyl-tRNA(Phe) + AMP + diphosphate + H(+). The sequence is that of Phenylalanine--tRNA ligase alpha subunit from Ureaplasma urealyticum serovar 10 (strain ATCC 33699 / Western).